A 298-amino-acid polypeptide reads, in one-letter code: Multifunctional dioxygenase ausE (298 aa).

Arginine 72 and glutamine 127 together coordinate substrate. Fe cation contacts are provided by histidine 130 and aspartate 132. Threonine 167 provides a ligand contact to substrate. Residue histidine 214 coordinates Fe cation. Arginine 226 serves as a coordination point for substrate.

Belongs to the PhyH family. In terms of assembly, homodimer. It depends on Fe cation as a cofactor.

The catalysed reaction is preaustinoid A1 + 2-oxoglutarate + O2 = preaustinoid A2 + succinate + CO2 + H2O. It catalyses the reaction preaustinoid A2 + 2-oxoglutarate + O2 = preaustinoid A3 + succinate + CO2 + H2O. The enzyme catalyses berkeleyone A + 2-oxoglutarate + O2 = preaustinoid A + succinate + CO2 + H2O. Its pathway is secondary metabolite biosynthesis; terpenoid biosynthesis. Its function is as follows. Multifunctional dioxygenase; part of the gene cluster B that mediates the biosynthesis of austinol and dehydroaustinol, two fungal meroterpenoids. The first step of the pathway is the synthesis of 3,5-dimethylorsellinic acid by the polyketide synthase ausA. 3,5-dimethylorsellinic acid is then prenylated by the polyprenyl transferase ausN. Further epoxidation by the FAD-dependent monooxygenase ausM and cyclization by the probable terpene cyclase ausL lead to the formation of protoaustinoid A. Protoaustinoid A is then oxidized to spiro-lactone preaustinoid A3 by the combined action of the FAD-binding monooxygenases ausB and ausC, and the dioxygenase ausE. Acid-catalyzed keto-rearrangement and ring contraction of the tetraketide portion of preaustinoid A3 by ausJ lead to the formation of preaustinoid A4. The aldo-keto reductase ausK, with the help of ausH, is involved in the next step by transforming preaustinoid A4 into isoaustinone which is in turn hydroxylated by the P450 monooxygenase ausI to form austinolide. Finally, the cytochrome P450 monooxygenase ausG modifies austinolide to austinol. Austinol can be further modified to dehydroaustinol which forms a diffusible complex with diorcinol that initiates conidiation. Due to genetic rearrangements of the clusters and the subsequent loss of some enzymes, the end products of the Emericella nidulans austinoid biosynthesis clusters are austinol and dehydroaustinol, even if additional enzymes, such as the O-acetyltransferase ausQ and the cytochrome P450 monooxygenase ausR are still functional. The polypeptide is Multifunctional dioxygenase ausE (Emericella nidulans (strain FGSC A4 / ATCC 38163 / CBS 112.46 / NRRL 194 / M139) (Aspergillus nidulans)).